Consider the following 44-residue polypeptide: Poly-ADP-ribosylation-amplifying and CtIP-maintaining micropeptide (44 aa).

A disordered region spans residues 1–44 (MAASGGTKKAQSGGRRLREPSSRPSRRARQRPRRGALRKAGRFL). Positions 24–44 (PSRRARQRPRRGALRKAGRFL) are enriched in basic residues.

In terms of assembly, interacts with KLHL15; preventing ubiquitination and degradation of RBBP8/CtIP. Interacts with PARP1.

Its subcellular location is the nucleus. It localises to the nucleolus. The protein localises to the chromosome. In terms of biological role, micropeptide that acts as a regulator of DNA repair both by preventing KLHL15-mediated ubiquitination and degradation of RBBP8/CtIP, and by promoting the poly-ADP-ribosyltransferase activity of PARP1. Prevents KLHL15-mediated ubiquitination of RBBP8/CtIP by competitively blocking the association between KLHL15 and RBBP8/CtIP. Recruited to DNA damage sites via association with poly-ADP-ribose chains, and enhances the poly-ADP-ribosyltransferase activity of PARP1. In Homo sapiens (Human), this protein is Poly-ADP-ribosylation-amplifying and CtIP-maintaining micropeptide.